A 575-amino-acid polypeptide reads, in one-letter code: E3 ubiquitin-protein ligase IpaH1.4 (575 aa).

Residues 1–270 are interaction with target proteins; sequence MIKSTNIQAI…PDYSGPQIFF (270 aa). LRR repeat units lie at residues 69–90, 91–115, 117–130, 131–150, 151–170, 171–195, 197–209, and 210–233; these read LQNQ…PDLP, PQIT…MLKV, HAQF…PALP, ETLE…PFLP, ENLT…PLLP, PELK…KLEG, ALAN…LPEL, and PFSM…VLRL. A linker region spans residues 271–281; sequence SMGNSATISAP. The E3 ubiquitin-protein ligase catalytic domain stretch occupies residues 282 to 575; that stretch reads EHSLADAVTA…LSENGSNHIA (294 aa). The NEL domain occupies 284-575; that stretch reads SLADAVTAWF…LSENGSNHIA (292 aa). Residue Cys368 is the Glycyl thioester intermediate of the active site.

The protein belongs to the LRR-containing bacterial E3 ligase family. In terms of assembly, interacts with human RBCK1/HOIL-1 and RNF31/HOIP components of the LUBAC complex. In terms of processing, ubiquitinated in the presence of host E1 ubiquitin-activating enzyme, E2 ubiquitin-conjugating enzyme and ubiquitin.

It is found in the secreted. The protein localises to the host cytoplasm. The catalysed reaction is S-ubiquitinyl-[E2 ubiquitin-conjugating enzyme]-L-cysteine + [acceptor protein]-L-lysine = [E2 ubiquitin-conjugating enzyme]-L-cysteine + N(6)-ubiquitinyl-[acceptor protein]-L-lysine.. Its pathway is protein modification; protein ubiquitination. Exists in an autoinhibited state in the absence of substrate protein, probably due to interactions of the leucine-rich repeat domain with the catalytic domain. Is activated upon binding to a substrate protein. Functionally, E3 ubiquitin-protein ligase effector that inhibits host cell innate immunity during bacterial infection by catalyzing 'Lys-48'-linked polyubiquitination and subsequent degradation of host RNF31/HOIP and RBCK1/HOIL-1. Host RNF31/HOIP is the catalytic component of the LUBAC complex, which conjugates linear ('Met-1'-linked) polyubiquitin chains at the surface of bacteria invading the host cytosol to form the ubiquitin coat surrounding bacteria. The bacterial ubiquitin coat acts as an 'eat-me' signal for xenophagy and promotes NF-kappa-B activation. By promoting degradation of host RNF31/HOIP, IpaH1.4 prevents formation of the bacterial ubiquitin coat and activation of host cell innate immunity. The chain is E3 ubiquitin-protein ligase IpaH1.4 from Shigella flexneri.